The sequence spans 176 residues: Japanin (176 aa).

Positions 1-24 (MKVLRCLVCSFYIIVSLITTMTIG) are cleaved as a signal peptide. Glu-47 contacts cholesterol. 2 disulfides stabilise this stretch: Cys-52/Cys-174 and Cys-138/Cys-162. N-linked (GlcNAc...) asparagine glycosylation is found at Asn-59 and Asn-155.

It belongs to the calycin superfamily. Lipocalin family. In terms of assembly, homodimer; non-disulfide-linked. Each monomer accommodates one molecule of cholesterol in a pocket. In terms of tissue distribution, expressed in salivary glands.

The protein localises to the secreted. In terms of biological role, salivary tick protein that modulates host immune response. This protein blocks dendritic cell (DC) differentiation from monocytes. In addition, it inhibits up-regulation of costimulatory molecules and pro-inflammatory cytokines in response to stimuli and promotes up-regulation of co-inhibitory molecules and the anti-inflammatory cytokine interleukin-10. It has a pocket to accomodate cholesterol, which may have immune-modulatory roles, either directly or through interactions with the host gut microbiota. The sequence is that of Japanin from Rhipicephalus appendiculatus (Brown ear tick).